A 298-amino-acid chain; its full sequence is 4-hydroxy-tetrahydrodipicolinate synthase (298 aa).

T51 is a pyruvate binding site. Residue Y139 is the Proton donor/acceptor of the active site. The active-site Schiff-base intermediate with substrate is the K167. Residue I209 coordinates pyruvate.

It belongs to the DapA family. As to quaternary structure, homotetramer; dimer of dimers.

It is found in the cytoplasm. It catalyses the reaction L-aspartate 4-semialdehyde + pyruvate = (2S,4S)-4-hydroxy-2,3,4,5-tetrahydrodipicolinate + H2O + H(+). It functions in the pathway amino-acid biosynthesis; L-lysine biosynthesis via DAP pathway; (S)-tetrahydrodipicolinate from L-aspartate: step 3/4. In terms of biological role, catalyzes the condensation of (S)-aspartate-beta-semialdehyde [(S)-ASA] and pyruvate to 4-hydroxy-tetrahydrodipicolinate (HTPA). This chain is 4-hydroxy-tetrahydrodipicolinate synthase, found in Haemophilus influenzae (strain PittGG).